The following is a 194-amino-acid chain: Fe/S biogenesis protein NfuA (194 aa).

2 residues coordinate [4Fe-4S] cluster: Cys-152 and Cys-155.

It belongs to the NfuA family. Homodimer. [4Fe-4S] cluster serves as cofactor.

Functionally, involved in iron-sulfur cluster biogenesis. Binds a 4Fe-4S cluster, can transfer this cluster to apoproteins, and thereby intervenes in the maturation of Fe/S proteins. Could also act as a scaffold/chaperone for damaged Fe/S proteins. The sequence is that of Fe/S biogenesis protein NfuA from Pseudomonas fluorescens (strain Pf0-1).